The sequence spans 430 residues: Enolase (430 aa).

Position 163 (Gln-163) interacts with (2R)-2-phosphoglycerate. Glu-205 acts as the Proton donor in catalysis. Positions 242, 286, and 313 each coordinate Mg(2+). (2R)-2-phosphoglycerate-binding residues include Lys-338, Arg-367, Ser-368, and Lys-389. The Proton acceptor role is filled by Lys-338.

It belongs to the enolase family. The cofactor is Mg(2+).

It is found in the cytoplasm. The protein resides in the secreted. The protein localises to the cell surface. It catalyses the reaction (2R)-2-phosphoglycerate = phosphoenolpyruvate + H2O. It participates in carbohydrate degradation; glycolysis; pyruvate from D-glyceraldehyde 3-phosphate: step 4/5. Catalyzes the reversible conversion of 2-phosphoglycerate (2-PG) into phosphoenolpyruvate (PEP). It is essential for the degradation of carbohydrates via glycolysis. The sequence is that of Enolase from Symbiobacterium thermophilum (strain DSM 24528 / JCM 14929 / IAM 14863 / T).